Reading from the N-terminus, the 144-residue chain is Maximins 3/H11 type 2 (144 aa).

A signal peptide spans 1 to 18; the sequence is MHFKYIVAVSFLIASAYA. 2 consecutive propeptides follow at residues 19-43 and 73-122; these read RSVQ…REIR and RTAE…KKEK. I143 carries the isoleucine amide modification.

This sequence belongs to the bombinin family. In terms of tissue distribution, expressed by the skin glands.

It is found in the secreted. Maximin-3 shows antibacterial activity against both Gram-positive and Gram-negative bacteria. It also shows antimicrobial activity against the fungus C.albicans, but not against A.flavus nor P.uticale. It has little hemolytic activity. It possess a significant cytotoxicity against tumor cell lines. It possess a significant anti-HIV activity. It shows high spermicidal activity. In terms of biological role, maximin-H11 shows antimicrobial activity against bacteria and against the fungus C.albicans. Shows strong hemolytic activity. This is Maximins 3/H11 type 2 from Bombina maxima (Giant fire-bellied toad).